A 481-amino-acid chain; its full sequence is Polygalacturonase QRT3 (481 aa).

The first 27 residues, 1–27 (MELRKSQVAMPVFLAIMSLMVSQVVFA), serve as a signal peptide directing secretion. 3 PbH1 repeats span residues 203–226 (SLRTSIDNCYITRFGDTNGILVKS), 261–282 (GNDNAVTDTVIFSARIGVMVSG), and 356–377 (IRGVSIVDNMFSGSGHGVQIVQ). N-linked (GlcNAc...) asparagine glycans are attached at residues Asn-415 and Asn-455.

Belongs to the glycosyl hydrolase 28 family. Expressed in the tapetum cells in the anthers and in the ovules of open flowers.

The protein resides in the secreted. The protein localises to the cell wall. It carries out the reaction (1,4-alpha-D-galacturonosyl)n+m + H2O = (1,4-alpha-D-galacturonosyl)n + (1,4-alpha-D-galacturonosyl)m.. In terms of biological role, polygalacturonase required for degrading the pollen mother cell wall during microspore development. The polypeptide is Polygalacturonase QRT3 (QRT3) (Arabidopsis thaliana (Mouse-ear cress)).